The primary structure comprises 460 residues: MSSKAWGGRFQQQPEDWVDEFNASIDFDQTLLDEDVQGSIAHATMLANQNIISQDDKDAIINGLKEIQQDFHNGKLAFKKSLEDIHLNIEHELIQRVGDAGGKLHTGRSRNDQVATDLHLYVKKEVLEIQDLIRSFQTSILKLAQSHVDTIMPGYTHLQRAQPISFAHHVMTYFWMLERDYSRFVDSMKRIDISPLGAAALSGTTHPIDRHETQQLLEFSSVYENSLDAVSDRDYIIETLHNISLTMIHLSRFAEEIIFWSTDEAKFITLSDAFSTGSSIMPQKKNPDMAELIRGKVGRATGHLMSMLVTLKGLPLAYNKDLQEDKEGLFDSVRTIKGSLRIFEGMLDTMTVNTDRLNETVHQDFSNATELADYLVAKDVPFRKAHEIVGKIVFECIQQGIYLLDVPLERYKELNSNIDQDVYDYLKPENCLSRRKSYGSTGQDAVRHQLKVAEKLLNND.

The protein belongs to the lyase 1 family. Argininosuccinate lyase subfamily.

It localises to the cytoplasm. It carries out the reaction 2-(N(omega)-L-arginino)succinate = fumarate + L-arginine. Its pathway is amino-acid biosynthesis; L-arginine biosynthesis; L-arginine from L-ornithine and carbamoyl phosphate: step 3/3. This is Argininosuccinate lyase from Staphylococcus haemolyticus (strain JCSC1435).